The primary structure comprises 434 residues: Tryptophan synthase beta chain 2 (434 aa).

Residue Lys110 is modified to N6-(pyridoxal phosphate)lysine.

The protein belongs to the TrpB family. In terms of assembly, tetramer of two alpha and two beta chains. Pyridoxal 5'-phosphate serves as cofactor.

It carries out the reaction (1S,2R)-1-C-(indol-3-yl)glycerol 3-phosphate + L-serine = D-glyceraldehyde 3-phosphate + L-tryptophan + H2O. It participates in amino-acid biosynthesis; L-tryptophan biosynthesis; L-tryptophan from chorismate: step 5/5. Functionally, the beta subunit is responsible for the synthesis of L-tryptophan from indole and L-serine. The sequence is that of Tryptophan synthase beta chain 2 (trpB2) from Aquifex aeolicus (strain VF5).